We begin with the raw amino-acid sequence, 401 residues long: S-adenosylmethionine synthase 1 (401 aa).

Position 15 (histidine 15) interacts with ATP. Aspartate 17 lines the Mg(2+) pocket. Glutamate 43 provides a ligand contact to K(+). The L-methionine site is built by glutamate 56 and glutamine 98. Positions glutamine 98–lysine 108 are flexible loop. ATP is bound by residues aspartate 173–lysine 175, arginine 246–phenylalanine 247, aspartate 255, arginine 261–lysine 262, alanine 278, and lysine 282. Aspartate 255 contributes to the L-methionine binding site. An L-methionine-binding site is contributed by lysine 286.

It belongs to the AdoMet synthase family. As to quaternary structure, homotetramer; dimer of dimers. It depends on Mg(2+) as a cofactor. Requires K(+) as cofactor.

It localises to the cytoplasm. The enzyme catalyses L-methionine + ATP + H2O = S-adenosyl-L-methionine + phosphate + diphosphate. It participates in amino-acid biosynthesis; S-adenosyl-L-methionine biosynthesis; S-adenosyl-L-methionine from L-methionine: step 1/1. Its function is as follows. Catalyzes the formation of S-adenosylmethionine (AdoMet) from methionine and ATP. The overall synthetic reaction is composed of two sequential steps, AdoMet formation and the subsequent tripolyphosphate hydrolysis which occurs prior to release of AdoMet from the enzyme. The polypeptide is S-adenosylmethionine synthase 1 (Frankia casuarinae (strain DSM 45818 / CECT 9043 / HFP020203 / CcI3)).